We begin with the raw amino-acid sequence, 337 residues long: MGFCIPSRSKMLKRGSRKSSSILARRPTPKKMNIVTDLENRLKKNSYIENTNQGNILMDSIFVSTMPVETLFGSYITDDYELKDLLNVTYNIKPDIVPDIKLDAVLDRDGNFRPADCFLVKLKHRDGFTKGALYLGHSAGFTATICLKNEGVSGLYIPGASVIRSNICQGDTVSRSSRGVQFLPQIGGEAIFLIVSLCPTKKLVETGFVIPEISSNDNAKIAARILSEKRKDTIAHIDTLIQHRQQLELAYYNSCMLTEFLHYCNSYAGTIKESLLKETIQKDINITHTNITTLLNETAKVIKLVKSLVDKEDTDIVNNFITKEIKTVEVLKQRQNS.

It belongs to the orthopoxvirus OPG055 family.

Functionally, stimulates increases in peripheral microtubule dynamics and may increase the motility of the infected cells, contributing to cell-to-cell spread of the virus. Seems to inhibit the signaling via the GTPase RHOA and DIAPH1/mDia. The sequence is that of Protein OPG055 (OPG055) from Homo sapiens (Human).